Here is a 330-residue protein sequence, read N- to C-terminus: Ketol-acid reductoisomerase (NADP(+)) (330 aa).

Positions 2-181 (MEKYHETDAD…GATRAVVLET (180 aa)) constitute a KARI N-terminal Rossmann domain. Residues 25-28 (YGSQ), arginine 48, serine 52, and 82-85 (DENQ) each bind NADP(+). Histidine 107 is an active-site residue. Glycine 133 contacts NADP(+). The 146-residue stretch at 182–327 (TFREETETDL…SELRAMMPQF (146 aa)) folds into the KARI C-terminal knotted domain. Positions 190, 194, 226, and 230 each coordinate Mg(2+). Serine 251 provides a ligand contact to substrate.

The protein belongs to the ketol-acid reductoisomerase family. Requires Mg(2+) as cofactor.

It carries out the reaction (2R)-2,3-dihydroxy-3-methylbutanoate + NADP(+) = (2S)-2-acetolactate + NADPH + H(+). The enzyme catalyses (2R,3R)-2,3-dihydroxy-3-methylpentanoate + NADP(+) = (S)-2-ethyl-2-hydroxy-3-oxobutanoate + NADPH + H(+). The protein operates within amino-acid biosynthesis; L-isoleucine biosynthesis; L-isoleucine from 2-oxobutanoate: step 2/4. Its pathway is amino-acid biosynthesis; L-valine biosynthesis; L-valine from pyruvate: step 2/4. In terms of biological role, involved in the biosynthesis of branched-chain amino acids (BCAA). Catalyzes an alkyl-migration followed by a ketol-acid reduction of (S)-2-acetolactate (S2AL) to yield (R)-2,3-dihydroxy-isovalerate. In the isomerase reaction, S2AL is rearranged via a Mg-dependent methyl migration to produce 3-hydroxy-3-methyl-2-ketobutyrate (HMKB). In the reductase reaction, this 2-ketoacid undergoes a metal-dependent reduction by NADPH to yield (R)-2,3-dihydroxy-isovalerate. The chain is Ketol-acid reductoisomerase (NADP(+)) from Methanocorpusculum labreanum (strain ATCC 43576 / DSM 4855 / Z).